The chain runs to 239 residues: 4-hydroxy-tetrahydrodipicolinate reductase (239 aa).

Residues aspartate 32, 73 to 75, and 98 to 101 each bind NAD(+); these read GTT and ASNF. Residue histidine 133 is the Proton donor/acceptor of the active site. Histidine 134 contributes to the (S)-2,3,4,5-tetrahydrodipicolinate binding site. The active-site Proton donor is lysine 137. Position 143-144 (143-144) interacts with (S)-2,3,4,5-tetrahydrodipicolinate; it reads GT.

Belongs to the DapB family.

It localises to the cytoplasm. It carries out the reaction (S)-2,3,4,5-tetrahydrodipicolinate + NAD(+) + H2O = (2S,4S)-4-hydroxy-2,3,4,5-tetrahydrodipicolinate + NADH + H(+). It catalyses the reaction (S)-2,3,4,5-tetrahydrodipicolinate + NADP(+) + H2O = (2S,4S)-4-hydroxy-2,3,4,5-tetrahydrodipicolinate + NADPH + H(+). It functions in the pathway amino-acid biosynthesis; L-lysine biosynthesis via DAP pathway; (S)-tetrahydrodipicolinate from L-aspartate: step 4/4. Catalyzes the conversion of 4-hydroxy-tetrahydrodipicolinate (HTPA) to tetrahydrodipicolinate. In Christiangramia forsetii (strain DSM 17595 / CGMCC 1.15422 / KT0803) (Gramella forsetii), this protein is 4-hydroxy-tetrahydrodipicolinate reductase.